The following is a 327-amino-acid chain: Ferrochelatase (327 aa).

The Fe cation site is built by H187 and E265.

It belongs to the ferrochelatase family.

It is found in the cytoplasm. It catalyses the reaction heme b + 2 H(+) = protoporphyrin IX + Fe(2+). It functions in the pathway porphyrin-containing compound metabolism; protoheme biosynthesis; protoheme from protoporphyrin-IX: step 1/1. Functionally, catalyzes the ferrous insertion into protoporphyrin IX. The sequence is that of Ferrochelatase from Chlamydia pneumoniae (Chlamydophila pneumoniae).